A 440-amino-acid chain; its full sequence is Streptokinase (440 aa).

Residues 1–26 form the signal peptide; it reads MKNYLSFGMFALLFALTFGTVKPVQA. The interval 72-94 is disordered; sequence PAQGGKTEQGLRPKSKPLATDKG.

Its function is as follows. This protein is not a protease, but it activates plasminogen by complexing with it. As a potential virulence factor, it is thought to prevent the formation of effective fibrin barriers around the site of infection, thereby contributing to the invasiveness of the cells. This Streptococcus pyogenes protein is Streptokinase (ska).